Reading from the N-terminus, the 229-residue chain is Enolase-phosphatase E1 (229 aa).

Belongs to the HAD-like hydrolase superfamily. MasA/MtnC family. As to quaternary structure, monomer. It depends on Mg(2+) as a cofactor.

The catalysed reaction is 5-methylsulfanyl-2,3-dioxopentyl phosphate + H2O = 1,2-dihydroxy-5-(methylsulfanyl)pent-1-en-3-one + phosphate. The protein operates within amino-acid biosynthesis; L-methionine biosynthesis via salvage pathway; L-methionine from S-methyl-5-thio-alpha-D-ribose 1-phosphate: step 3/6. It participates in amino-acid biosynthesis; L-methionine biosynthesis via salvage pathway; L-methionine from S-methyl-5-thio-alpha-D-ribose 1-phosphate: step 4/6. Its function is as follows. Bifunctional enzyme that catalyzes the enolization of 2,3-diketo-5-methylthiopentyl-1-phosphate (DK-MTP-1-P) into the intermediate 2-hydroxy-3-keto-5-methylthiopentenyl-1-phosphate (HK-MTPenyl-1-P), which is then dephosphorylated to form the acireductone 1,2-dihydroxy-3-keto-5-methylthiopentene (DHK-MTPene). This Citrobacter koseri (strain ATCC BAA-895 / CDC 4225-83 / SGSC4696) protein is Enolase-phosphatase E1.